A 155-amino-acid chain; its full sequence is Small ribosomal subunit protein uS7c (155 aa).

The protein belongs to the universal ribosomal protein uS7 family. In terms of assembly, part of the 30S ribosomal subunit.

It localises to the plastid. The protein localises to the chloroplast. Functionally, one of the primary rRNA binding proteins, it binds directly to 16S rRNA where it nucleates assembly of the head domain of the 30S subunit. The chain is Small ribosomal subunit protein uS7c (rps7) from Pinus koraiensis (Korean pine).